A 1640-amino-acid polypeptide reads, in one-letter code: Phospholipase D C (1640 aa).

The segment covering 122-132 has biased composition (polar residues); sequence SHRSNQSFNHS. 4 disordered regions span residues 122–247, 264–283, 439–499, and 521–541; these read SHRS…KRLS, HNQN…HTTT, EKQQ…YKYN, and DDEY…PSQE. Residues 133 to 193 show a composition bias toward low complexity; the sequence is NSTTPLNTTN…YSSDNSYLHN (61 aa). A compositionally biased stretch (acidic residues) spans 197–231; that stretch reads DIYEDEDDEDDEDDDDDEDEDDEGKEFEQDDEDES. A compositionally biased stretch (polar residues) spans 232 to 247; sequence TISSMSLKNSQAKRLS. 2 stretches are compositionally biased toward low complexity: residues 264-273 and 467-499; these read HNQNHQNHQN and TTTT…YKYN. The span at 521-534 shows a compositional bias: acidic residues; it reads DDEYYYGEYDDEDD. The 28-residue stretch at 1009–1036 folds into the PLD phosphodiesterase 1 domain; that stretch reads LYWSHHQKVVVVDQRIAFIGGLDLCFGR. Active-site residues include His1014, Lys1016, and Asp1021. Low complexity-rich tracts occupy residues 1149 to 1274 and 1282 to 1296; these read INNN…NNLN and HNNS…QQQQ. Residues 1149–1315 form a disordered region; sequence INNNNNNANN…YQPPLPPQQR (167 aa). Over residues 1297–1306 the composition is skewed to basic residues; that stretch reads QHHHHHHHHY. The region spanning 1460 to 1487 is the PLD phosphodiesterase 2 domain; the sequence is EQIYVHSKVLIVDDKIAIIGSANINDRS. Residues His1465, Lys1467, and Asp1472 contribute to the active site.

This sequence belongs to the phospholipase D family.

The catalysed reaction is a 1,2-diacyl-sn-glycero-3-phosphocholine + H2O = a 1,2-diacyl-sn-glycero-3-phosphate + choline + H(+). Its activity is regulated as follows. Inhibited by butan-1-ol. Its function is as follows. Plays a role in cell growth. Hydrolyzes membrane phospholipids, such as PtdCho (phosphatidylcholine), producing the free headgroup and PtdOH (phosphatidic acid; signaling molecule on its own). Involved in the inhibition of actin-based motility and endocytosis. Its inhibition causes complete collapse of F-actin organization. The protein is Phospholipase D C (pldC) of Dictyostelium discoideum (Social amoeba).